Reading from the N-terminus, the 172-residue chain is MVDKRESYTKEDLLASGRGELFGAKGPQLPAPNMLMMDRVVKMTETGGNYDKGYVEAELDINPDLWFFGCHFIGDPVMPGCLGLDAMWQLVGFYLGWLGGEGKGRALGVGEVKFTGQVLPTAKKVTYRIHFKRIVNRRLIMGLADGEVLVDGRLIYTASDLKVGLFQDTSSF.

The active site involves histidine 71.

Belongs to the thioester dehydratase family. FabA subfamily. As to quaternary structure, homodimer.

It localises to the cytoplasm. The enzyme catalyses a (3R)-hydroxyacyl-[ACP] = a (2E)-enoyl-[ACP] + H2O. It carries out the reaction (3R)-hydroxydecanoyl-[ACP] = (2E)-decenoyl-[ACP] + H2O. It catalyses the reaction (2E)-decenoyl-[ACP] = (3Z)-decenoyl-[ACP]. Its pathway is lipid metabolism; fatty acid biosynthesis. In terms of biological role, necessary for the introduction of cis unsaturation into fatty acids. Catalyzes the dehydration of (3R)-3-hydroxydecanoyl-ACP to E-(2)-decenoyl-ACP and then its isomerization to Z-(3)-decenoyl-ACP. Can catalyze the dehydratase reaction for beta-hydroxyacyl-ACPs with saturated chain lengths up to 16:0, being most active on intermediate chain length. This is 3-hydroxydecanoyl-[acyl-carrier-protein] dehydratase from Escherichia fergusonii (strain ATCC 35469 / DSM 13698 / CCUG 18766 / IAM 14443 / JCM 21226 / LMG 7866 / NBRC 102419 / NCTC 12128 / CDC 0568-73).